The sequence spans 62 residues: MPNPKRRHSKARTGNRRAHDHLSAHSLSECPNCHWKKMPHRACAKCGYYKGREVLEVEDNKK.

Basic residues predominate over residues 1–19 (MPNPKRRHSKARTGNRRAH). The segment at 1–23 (MPNPKRRHSKARTGNRRAHDHLS) is disordered.

It belongs to the bacterial ribosomal protein bL32 family.

This chain is Large ribosomal subunit protein bL32, found in Koribacter versatilis (strain Ellin345).